The chain runs to 435 residues: E3 ubiquitin-protein ligase RNFT1 (435 aa).

The disordered stretch occupies residues 1–62 (MPLFLLSLPT…SSEDASTPQC (62 aa)). Residues 16 to 34 (GHERRQRPEAKTSGSEKKY) show a composition bias toward basic and acidic residues. Residues 40-62 (ANRSQLHSPPGTGSSEDASTPQC) are compositionally biased toward polar residues. A run of 6 helical transmembrane segments spans residues 158 to 178 (ILIL…LGIG), 203 to 223 (IQCA…YYTF), 233 to 253 (IFLN…IVGI), 256 to 276 (FILK…PSFI), 298 to 318 (TFVP…FGNV), and 323 to 343 (LGIL…FGHL). The interval 368-419 (CSDVDDICSICQAEFQKPILLICQHIFCEECMTLWFNREKTCPLCRTVISDH) is required for ubiquitin ligase activity and for protection against ER stress-induced cell death. An RING-type zinc finger spans residues 375 to 413 (CSICQAEFQKPILLICQHIFCEECMTLWFNREKTCPLCR).

In terms of tissue distribution, expressed at highest levels in testis, lower levels in heart, liver, lung, and kidney. Not detected in brain, ovary, and uterus. Down-regulated in testis from patients with maturation arrest (MA) or Sertoli cell-only syndrome (SCOS). Ubiquitously expressed with high expression in testis.

It is found in the endoplasmic reticulum membrane. It carries out the reaction S-ubiquitinyl-[E2 ubiquitin-conjugating enzyme]-L-cysteine + [acceptor protein]-L-lysine = [E2 ubiquitin-conjugating enzyme]-L-cysteine + N(6)-ubiquitinyl-[acceptor protein]-L-lysine.. It functions in the pathway protein modification; protein ubiquitination. E3 ubiquitin-protein ligase that acts in the endoplasmic reticulum (ER)-associated degradation (ERAD) pathway, which targets misfolded proteins that accumulate in the endoplasmic reticulum (ER) for ubiquitination and subsequent proteasome-mediated degradation. Protects cells from ER stress-induced apoptosis. This Homo sapiens (Human) protein is E3 ubiquitin-protein ligase RNFT1 (RNFT1).